A 119-amino-acid polypeptide reads, in one-letter code: Large ribosomal subunit protein uL18 (119 aa).

The segment at 1-26 is disordered; it reads MGQNDKAARRQKIKLRSKTRGQGTAA. Basic residues predominate over residues 9–19; the sequence is RRQKIKLRSKT.

It belongs to the universal ribosomal protein uL18 family. Part of the 50S ribosomal subunit; part of the 5S rRNA/L5/L18/L25 subcomplex. Contacts the 5S and 23S rRNAs.

Functionally, this is one of the proteins that bind and probably mediate the attachment of the 5S RNA into the large ribosomal subunit, where it forms part of the central protuberance. The sequence is that of Large ribosomal subunit protein uL18 from Prosthecochloris aestuarii (strain DSM 271 / SK 413).